A 775-amino-acid polypeptide reads, in one-letter code: DENN domain-containing protein 1B (775 aa).

In terms of domain architecture, uDENN spans 14–143 (DLVLKVKCHA…YNHPVPKANT (130 aa)). Residues 180–316 (GLPTIPESRN…VVSALKNKLK (137 aa)) form the cDENN domain. In terms of domain architecture, dDENN spans 318 to 395 (QSTATGDGVA…DGRLAKLNAG (78 aa)). Positions 398–402 (FSDVF) match the FXDXF motif motif. The residue at position 520 (Y520) is a Phosphotyrosine. Phosphoserine is present on residues S535, S536, S549, and S552. Positions 566 to 575 (DLLGEILDTL) match the Clathrin box motif. Disordered regions lie at residues 635 to 654 (DSAL…VSSS) and 671 to 706 (HLGA…KRET). Residues 639 to 651 (HGKHLPPSPRKRV) are compositionally biased toward basic residues. 2 positions are modified to phosphoserine: S652 and S653. Residues 695-706 (QTDKGKTEKRET) show a composition bias toward basic and acidic residues.

Interacts with RAB35. Interacts with clathrin heavy chain/CLTC. Interacts with components of the adapter protein complex 2 (AP-2) AP2A2 and AP2B1. Interacts with CD3E. In terms of processing, phosphorylated on serine and/or threonine, possibly regulating the guanine nucleotide exchange factor (GEF) activity. In terms of tissue distribution, highly expressed in dendritic and natural killer cells and at lower levels in other myeloid lineage cells and in pituitary. Significantly up-regulated in effector memory T-cells as compared with naive T-cells.

The protein localises to the cytoplasm. It is found in the cytosol. It localises to the cytoplasmic vesicle. Its subcellular location is the clathrin-coated vesicle. In terms of biological role, guanine nucleotide exchange factor (GEF) for RAB35 that acts as a regulator of T-cell receptor (TCR) internalization in TH2 cells. Acts by promoting the exchange of GDP to GTP, converting inactive GDP-bound RAB35 into its active GTP-bound form. Plays a role in clathrin-mediated endocytosis. Controls cytokine production in TH2 lymphocytes by controlling the rate of TCR internalization and routing to endosomes: acts by mediating clathrin-mediated endocytosis of TCR via its interaction with the adapter protein complex 2 (AP-2) and GEF activity. Dysregulation leads to impaired TCR down-modulation and recycling, affecting cytokine production in TH2 cells. The protein is DENN domain-containing protein 1B of Homo sapiens (Human).